Consider the following 294-residue polypeptide: Phosphoribosylaminoimidazole-succinocarboxamide synthase (294 aa).

This sequence belongs to the SAICAR synthetase family.

The enzyme catalyses 5-amino-1-(5-phospho-D-ribosyl)imidazole-4-carboxylate + L-aspartate + ATP = (2S)-2-[5-amino-1-(5-phospho-beta-D-ribosyl)imidazole-4-carboxamido]succinate + ADP + phosphate + 2 H(+). It participates in purine metabolism; IMP biosynthesis via de novo pathway; 5-amino-1-(5-phospho-D-ribosyl)imidazole-4-carboxamide from 5-amino-1-(5-phospho-D-ribosyl)imidazole-4-carboxylate: step 1/2. The sequence is that of Phosphoribosylaminoimidazole-succinocarboxamide synthase from Thermoplasma acidophilum (strain ATCC 25905 / DSM 1728 / JCM 9062 / NBRC 15155 / AMRC-C165).